Reading from the N-terminus, the 195-residue chain is dITP/XTP pyrophosphatase (195 aa).

8-13 (SNNQGK) serves as a coordination point for substrate. 2 residues coordinate Mg(2+): Glu-39 and Asp-68. Asp-68 functions as the Proton acceptor in the catalytic mechanism. Substrate contacts are provided by residues Ser-69, 149–152 (FGYD), Lys-172, and 177–178 (HR).

This sequence belongs to the HAM1 NTPase family. Homodimer. The cofactor is Mg(2+).

The enzyme catalyses XTP + H2O = XMP + diphosphate + H(+). The catalysed reaction is dITP + H2O = dIMP + diphosphate + H(+). It carries out the reaction ITP + H2O = IMP + diphosphate + H(+). In terms of biological role, pyrophosphatase that catalyzes the hydrolysis of nucleoside triphosphates to their monophosphate derivatives, with a high preference for the non-canonical purine nucleotides XTP (xanthosine triphosphate), dITP (deoxyinosine triphosphate) and ITP. Seems to function as a house-cleaning enzyme that removes non-canonical purine nucleotides from the nucleotide pool, thus preventing their incorporation into DNA/RNA and avoiding chromosomal lesions. This is dITP/XTP pyrophosphatase from Staphylococcus aureus (strain COL).